Consider the following 308-residue polypeptide: General transcription factor IIH subunit 3 (308 aa).

The C4-type zinc finger occupies 268 to 285; sequence CSVCLSIFCNFSPICTTC.

Belongs to the TFB4 family. As to quaternary structure, part of a TFIID-containing RNA polymerase II pre-initiation complex that is composed of TBP and at least GTF2A1, GTF2A2, GTF2E1, GTF2E2, GTF2F1, GTF2H2, GTF2H3, GTF2H4, GTF2H5, GTF2B, TCEA1, ERCC2, ERCC3, TAF1, TAF2, TAF3, TAF4, TAF5, TAF6, TAF7, TAF8, TAF9, TAF10, TAF11, TAF12 and TAF13. Component of the 7-subunit TFIIH core complex composed of XPB/ERCC3, XPD/ERCC2, GTF2H1, GTF2H2, GTF2H3, GTF2H4 and GTF2H5, which is active in NER. The core complex associates with the 3-subunit CDK-activating kinase (CAK) module composed of CCNH/cyclin H, CDK7 and MNAT1 to form the 10-subunit holoenzyme (holo-TFIIH) active in transcription. Interacts with RARA; the interaction requires prior phosphorylation of RARA on 'Ser-369' which then enhances interaction of RARA with CDK7.

The protein localises to the nucleus. Component of the general transcription and DNA repair factor IIH (TFIIH) core complex, which is involved in general and transcription-coupled nucleotide excision repair (NER) of damaged DNA and, when complexed to CAK, in RNA transcription by RNA polymerase II. In NER, TFIIH acts by opening DNA around the lesion to allow the excision of the damaged oligonucleotide and its replacement by a new DNA fragment. In transcription, TFIIH has an essential role in transcription initiation. When the pre-initiation complex (PIC) has been established, TFIIH is required for promoter opening and promoter escape. Phosphorylation of the C-terminal tail (CTD) of the largest subunit of RNA polymerase II by the kinase module CAK controls the initiation of transcription. The polypeptide is General transcription factor IIH subunit 3 (GTF2H3) (Homo sapiens (Human)).